A 95-amino-acid chain; its full sequence is Sec-independent protein translocase protein TatA (95 aa).

Residues 1-21 (MGSMSVWHWVIVAVVVMLLFG) traverse the membrane as a helical segment. The segment at 42-95 (GMADDETQPNTATSVPPVGPNDPVRTLPHQGAPGTAPQPPHVQPHVPAGDHKAV) is disordered.

It belongs to the TatA/E family. In terms of assembly, the Tat system comprises two distinct complexes: a TatABC complex, containing multiple copies of TatA, TatB and TatC subunits, and a separate TatA complex, containing only TatA subunits. Substrates initially bind to the TatABC complex, which probably triggers association of the separate TatA complex to form the active translocon.

It is found in the cell inner membrane. Part of the twin-arginine translocation (Tat) system that transports large folded proteins containing a characteristic twin-arginine motif in their signal peptide across membranes. TatA could form the protein-conducting channel of the Tat system. This Methylorubrum extorquens (strain PA1) (Methylobacterium extorquens) protein is Sec-independent protein translocase protein TatA.